A 1933-amino-acid polypeptide reads, in one-letter code: WD repeat-containing protein 81 (1933 aa).

Residues 1-643 form a necessary and sufficient for the interaction with SQSTM1 region; the sequence is MAQGSRRRKV…TPCESGWTRE (643 aa). Disordered regions lie at residues 305–334, 663–714, 1038–1057, 1090–1209, 1517–1544, and 1565–1590; these read PSED…RPGC, SIPG…GKIV, CAFG…SGLG, QPQE…EGKE, SLRN…SCLQ, and DSQP…SRNE. Basic and acidic residues predominate over residues 314 to 330; that stretch reads SEEKDRTGVKSEKDGEG. The BEACH domain occupies 333–610; it reads GCPTCQKELR…IPRLLVQPIQ (278 aa). Positions 668–693 are enriched in low complexity; the sequence is AGDQPGSSSSQASPGLLPFSAPSGSR. Polar residues-rich tracts occupy residues 1100–1112 and 1131–1140; these read GQLS…SEAS and VKSGDSSQDL. The segment covering 1145-1166 has biased composition (acidic residues); the sequence is GSEEEEEEEEGCVVLEEEEQDE. 5 WD repeats span residues 1638–1677, 1684–1724, 1776–1815, 1818–1856, and 1903–1933; these read GHTG…DGTS, IYAQ…TLRT, LNPG…VLRG, AHEG…PTHH, and NFRG…RLLA.

The protein belongs to the WD repeat WDR81 family. In terms of assembly, interacts with WDR91; involved in early to late endosome cargo transport. Interacts with BECN1; negatively regulates the PI3 kinase/PI3K activity associated with endosomal membranes. Interacts with SQSTM1; the interaction is direct and regulates the interaction of SQSTM1 with ubiquitinated proteins. Interacts with MAP1LC3C; recruits MAP1LC3C to ubiquitinated protein aggregates in the aggrephagy process.

The protein localises to the early endosome membrane. The protein resides in the late endosome membrane. It is found in the lysosome membrane. Its subcellular location is the cytoplasmic vesicle. It localises to the autophagosome membrane. The protein localises to the mitochondrion. The protein resides in the cytoplasm. It is found in the cytosol. Functions as a negative regulator of the PI3 kinase/PI3K activity associated with endosomal membranes via BECN1, a core subunit of the PI3K complex. By modifying the phosphatidylinositol 3-phosphate/PtdInsP3 content of endosomal membranes may regulate endosome fusion, recycling, sorting and early to late endosome transport. It is for instance, required for the delivery of cargos like BST2/tetherin from early to late endosome and thereby participates indirectly to their degradation by the lysosome. May also play a role in aggrephagy, the macroautophagic degradation of ubiquitinated protein aggregates. In this process, may regulate the interaction of SQSTM1 with ubiquitinated proteins and also recruit MAP1LC3C. May also be involved in maintenance of normal mitochondrial structure and organization. This is WD repeat-containing protein 81 from Rattus norvegicus (Rat).